Consider the following 2194-residue polypeptide: PDZ and LIM domain protein Zasp (2194 aa).

Residues 8–90 (QIKLSRFDAQ…NFVITVQRGG (83 aa)) enclose the PDZ domain. The interval 211–277 (TGQSTPAFGN…KPPSTGGLPT (67 aa)) is disordered. The span at 228 to 253 (PQQLQQPQQQYNQHQQHYHQQQQQQQ) shows a compositional bias: low complexity. An LIM zinc-binding 1 domain is found at 280–339 (NICTECERLITGVFVRIKDKNLHVECFKCATCGTSLKNQGYYNFNNKLYCDIHAKQAAIN). The span at 415 to 435 (AATPQAATATDSPAATASSSD) shows a compositional bias: low complexity. Disordered stretches follow at residues 415–436 (AATP…SSDN), 457–476 (VALA…DQPF), 511–558 (GAAA…AVEE), 580–611 (SRQS…YIPP), 623–692 (VQQV…TTSE), 896–940 (AAAA…PRGS), 1223–1260 (LTQK…QRTQ), 1297–1322 (QSQS…PPAN), 1550–1632 (LNAS…QQPE), 1646–1738 (QREQ…YGKT), and 1815–1837 (APPP…SGYQ). A compositionally biased stretch (low complexity) spans 515-530 (PKSPVSYPPQQQQQSP). Composition is skewed to polar residues over residues 580–590 (SRQSQRGSSFT) and 644–667 (VGTS…TASA). Residues 676 to 692 (SSDSYTSTSTTTTTTSE) show a composition bias toward low complexity. The span at 1598-1610 (QTGSITTGQSYQG) shows a compositional bias: polar residues. Low complexity-rich tracts occupy residues 1616 to 1630 (SEQS…YNQQ), 1646 to 1668 (QREQ…TRSQ), and 1699 to 1727 (SQSV…QNQS). LIM zinc-binding domains are found at residues 2018–2078 (PLCN…KYLA), 2079–2138 (PTCS…LFTT), and 2139–2194 (KCFA…NHAR).

In terms of assembly, interacts with alpha-actinin (Actn). In terms of tissue distribution, expression is first detected in the proctodeum and the midgut primordium. In stage 11 embryos, expression is predominant in the leading edge of epidermal cells adjacent to the amnioserosa. Stage 12 embryos exhibit expression in the midgut and the leading edge. Expressed in several rows of germ band cells next to the leading edge at stage 14. Strong expression is visible in the midgut and pharyngeal muscles of stage 17 embryos. Also expressed in somatic muscles and visceral mesoderm. Colocalizes with mys (beta PS integrin) in myotendinous junctions and with Actn in muscle Z lines.

The protein localises to the cytoplasm. The protein resides in the cytoskeleton. Regulator of cell matrix adhesion having two related functions, one upstream of Actn organizing the Z line and the other downstream of integrins regulating assembly of integrin adhesion sites. Also required for the formation of myotendinous junctions in muscles. The protein is PDZ and LIM domain protein Zasp (Zasp52) of Drosophila melanogaster (Fruit fly).